The sequence spans 199 residues: dITP/XTP pyrophosphatase (199 aa).

Residue 9 to 14 (TGNKGK) coordinates substrate. Residues E41 and D70 each contribute to the Mg(2+) site. Residue D70 is the Proton acceptor of the active site. Residues S71, 157 to 160 (FGYD), K180, and 185 to 186 (HR) contribute to the substrate site.

The protein belongs to the HAM1 NTPase family. As to quaternary structure, homodimer. Requires Mg(2+) as cofactor.

The catalysed reaction is XTP + H2O = XMP + diphosphate + H(+). It catalyses the reaction dITP + H2O = dIMP + diphosphate + H(+). The enzyme catalyses ITP + H2O = IMP + diphosphate + H(+). In terms of biological role, pyrophosphatase that catalyzes the hydrolysis of nucleoside triphosphates to their monophosphate derivatives, with a high preference for the non-canonical purine nucleotides XTP (xanthosine triphosphate), dITP (deoxyinosine triphosphate) and ITP. Seems to function as a house-cleaning enzyme that removes non-canonical purine nucleotides from the nucleotide pool, thus preventing their incorporation into DNA/RNA and avoiding chromosomal lesions. In Mannheimia succiniciproducens (strain KCTC 0769BP / MBEL55E), this protein is dITP/XTP pyrophosphatase.